The sequence spans 120 residues: Large ribosomal subunit protein bL20 (120 aa).

Belongs to the bacterial ribosomal protein bL20 family.

Its function is as follows. Binds directly to 23S ribosomal RNA and is necessary for the in vitro assembly process of the 50S ribosomal subunit. It is not involved in the protein synthesizing functions of that subunit. This Ligilactobacillus salivarius (strain UCC118) (Lactobacillus salivarius) protein is Large ribosomal subunit protein bL20.